The chain runs to 280 residues: Shikimate dehydrogenase (NADP(+)) (280 aa).

Residues 23–25 (SLS) and Thr70 contribute to the shikimate site. Lys74 functions as the Proton acceptor in the catalytic mechanism. Residues Asn95 and Asp111 each coordinate shikimate. Residues 135–139 (GSGGA), 158–163 (NRTISK), and Ile221 each bind NADP(+). Tyr223 is a binding site for shikimate. Gly247 provides a ligand contact to NADP(+).

This sequence belongs to the shikimate dehydrogenase family. In terms of assembly, homodimer.

It catalyses the reaction shikimate + NADP(+) = 3-dehydroshikimate + NADPH + H(+). The protein operates within metabolic intermediate biosynthesis; chorismate biosynthesis; chorismate from D-erythrose 4-phosphate and phosphoenolpyruvate: step 4/7. Its function is as follows. Involved in the biosynthesis of the chorismate, which leads to the biosynthesis of aromatic amino acids. Catalyzes the reversible NADPH linked reduction of 3-dehydroshikimate (DHSA) to yield shikimate (SA). This chain is Shikimate dehydrogenase (NADP(+)), found in Buchnera aphidicola subsp. Cinara cedri (strain Cc).